The sequence spans 383 residues: Neuropeptide Y receptor type 1 (383 aa).

Over methionine 1–histidine 34 the chain is Extracellular. Asparagine 2, asparagine 11, and asparagine 17 each carry an N-linked (GlcNAc...) asparagine glycan. A helical transmembrane segment spans residues leucine 35–valine 55. Topologically, residues serine 56–leucine 87 are cytoplasmic. A helical membrane pass occupies residues leucine 88–phenylalanine 108. At glycine 109–asparagine 116 the chain is on the extracellular side. Cysteine 113 and cysteine 198 are oxidised to a cystine. A helical membrane pass occupies residues proline 117–glutamate 137. Over arginine 138–histidine 154 the chain is Cytoplasmic. A helical transmembrane segment spans residues alanine 155–isoleucine 175. Residues tyrosine 176 to tyrosine 211 are Extracellular-facing. The helical transmembrane segment at threonine 212–phenylalanine 232 threads the bilayer. At lysine 233–arginine 260 the chain is on the cytoplasmic side. The chain crosses the membrane as a helical span at residues isoleucine 261 to isoleucine 281. The Extracellular segment spans residues phenylalanine 282 to asparagine 299. A helical membrane pass occupies residues leucine 300 to tyrosine 320. Over glycine 321–isoleucine 383 the chain is Cytoplasmic. The S-palmitoyl cysteine moiety is linked to residue cysteine 338. Phosphoserine occurs at positions 368 and 376.

It belongs to the G-protein coupled receptor 1 family.

The protein localises to the cell membrane. Its function is as follows. Receptor for neuropeptide Y and peptide YY. The sequence is that of Neuropeptide Y receptor type 1 (NPY1R) from Cavia porcellus (Guinea pig).